A 536-amino-acid polypeptide reads, in one-letter code: Nucleosome assembly protein 1-like 3 (536 aa).

Disordered regions lie at residues 1 to 104 (MAEA…DKLP) and 160 to 338 (PTEE…KEDP). The segment covering 35 to 75 (SNSSSSTTSCGSTGSSSSSSSSSSSSSSSSSGSSGSSSNGS) has biased composition (low complexity). A compositionally biased stretch (basic residues) spans 77-95 (LHQKKRVPGPSRRAQRRPS). The span at 160 to 184 (PTEEECEWNSEEEFSGDEEMQDDTP) shows a compositional bias: acidic residues. Basic and acidic residues-rich tracts occupy residues 199-220 (GKEN…PEAK) and 227-269 (PKET…KTDS). Polar residues predominate over residues 287–300 (TQANAEYTDQPTED). Positions 306 to 324 (PVREAQKRVPETRPEERVN) are enriched in basic and acidic residues.

It belongs to the nucleosome assembly protein (NAP) family.

Its subcellular location is the nucleus. The protein is Nucleosome assembly protein 1-like 3 (Nap1l3) of Rattus norvegicus (Rat).